The following is a 153-amino-acid chain: Interleukin-4 (153 aa).

The first 24 residues, 1–24 (MGLTSQLLPPLFFLLACAGNFAHG), serve as a signal peptide directing secretion. Intrachain disulfides connect C27-C151, C48-C89, and C70-C123. Residue N62 is glycosylated (N-linked (GlcNAc...) asparagine).

This sequence belongs to the IL-4/IL-13 family.

It localises to the secreted. Participates in at least several B-cell activation processes as well as of other cell types. It is a costimulator of DNA-synthesis. It induces the expression of class II MHC molecules on resting B-cells. It enhances both secretion and cell surface expression of IgE and IgG1. It also regulates the expression of the low affinity Fc receptor for IgE (CD23) on both lymphocytes and monocytes. Positively regulates IL31RA expression in macrophages. Stimulates autophagy in dendritic cells by interfering with mTORC1 signaling and through the induction of RUFY4. The chain is Interleukin-4 (IL4) from Papio anubis (Olive baboon).